A 273-amino-acid chain; its full sequence is DnaJ homolog subfamily C member 27 (273 aa).

The segment at 1–18 (MESNVPKRKEPLKSLRIK) is required for interaction with MAPK1. GTP is bound by residues 23-30 (GNAEVGKS), 71-75 (DMAGH), and 134-137 (NKID). One can recognise a J domain in the interval 217–273 (DSWEMLGVRPGASREEVNKAYRKLAVLLHPDKCVAPGSEDAFKAVVNARTALLKNIK).

Belongs to the small GTPase superfamily. Rab family. As to quaternary structure, interacts directly with MAPK1 (wild-type and kinase-deficient forms). Interacts directly (in GTP-bound form) with MAP2K1 (wild-type and kinase-deficient forms).

The protein resides in the nucleus. In terms of biological role, GTPase which can activate the MEK/ERK pathway and induce cell transformation when overexpressed. May act as a nuclear scaffold for MAPK1, probably by association with MAPK1 nuclear export signal leading to enhanced ERK1/ERK2 signaling. The sequence is that of DnaJ homolog subfamily C member 27 (Dnajc27) from Rattus norvegicus (Rat).